A 664-amino-acid chain; its full sequence is Intraflagellar transport protein 70A2 (664 aa).

TPR repeat units follow at residues 11–44 (DGEF…SSRS), 45–78 (RAGL…HPEL), 153–186 (PDGL…SGYQ), 188–220 (DVSY…GIRQ), 395–423 (QVQE…EKYI), 424–456 (PVLM…CNDH), and 458–491 (VWKL…NYDN). A coiled-coil region spans residues 507 to 534 (YIMTSQNEEAEELMRKIEKEEEQLSYGD). A TPR 8 repeat occupies 543–576 (CIVNLVIGTLYCAKGNYDFGISRVIKSLEPYHKK).

This sequence belongs to the TTC30/dfy-1/fleer family. In terms of assembly, interacts wit the IFT B complex component IFT52.

It localises to the cell projection. The protein resides in the cilium. Functionally, required for polyglutamylation of axonemal tubulin. Plays a role in anterograde intraflagellar transport (IFT), the process by which cilia precursors are transported from the base of the cilium to the site of their incorporation at the tip. The polypeptide is Intraflagellar transport protein 70A2 (Ift70a2) (Mus musculus (Mouse)).